The primary structure comprises 306 residues: D-alanine--D-alanine ligase B (306 aa).

Residues 101-303 (KLLWQGAGLP…FSQLVVRILE (203 aa)) enclose the ATP-grasp domain. An ATP-binding site is contributed by 134–189 (ISALGLPLIVKPSREGSSVGMTKVVEENALQGALSLAFQHDDEILIEKWLCGPEFT). Residues D257, E270, and N272 each contribute to the Mg(2+) site.

Belongs to the D-alanine--D-alanine ligase family. In terms of assembly, monomer. It depends on Mg(2+) as a cofactor. Mn(2+) is required as a cofactor.

It is found in the cytoplasm. It catalyses the reaction 2 D-alanine + ATP = D-alanyl-D-alanine + ADP + phosphate + H(+). It participates in cell wall biogenesis; peptidoglycan biosynthesis. Cell wall formation. This chain is D-alanine--D-alanine ligase B (ddlB), found in Salmonella typhimurium (strain LT2 / SGSC1412 / ATCC 700720).